The chain runs to 350 residues: DNA polymerase IV (350 aa).

The region spanning 6-187 (IIHIDMDAFY…LPVEKIFGIG (182 aa)) is the UmuC domain. Mg(2+) is bound by residues Asp10 and Asp105. Glu106 is an active-site residue.

It belongs to the DNA polymerase type-Y family. In terms of assembly, monomer. The cofactor is Mg(2+).

It localises to the cytoplasm. The enzyme catalyses DNA(n) + a 2'-deoxyribonucleoside 5'-triphosphate = DNA(n+1) + diphosphate. Its function is as follows. Poorly processive, error-prone DNA polymerase involved in untargeted mutagenesis. Copies undamaged DNA at stalled replication forks, which arise in vivo from mismatched or misaligned primer ends. These misaligned primers can be extended by PolIV. Exhibits no 3'-5' exonuclease (proofreading) activity. May be involved in translesional synthesis, in conjunction with the beta clamp from PolIII. The chain is DNA polymerase IV from Protochlamydia amoebophila (strain UWE25).